A 468-amino-acid chain; its full sequence is Argininosuccinate lyase (468 aa).

Belongs to the lyase 1 family. Argininosuccinate lyase subfamily.

The protein localises to the cytoplasm. It carries out the reaction 2-(N(omega)-L-arginino)succinate = fumarate + L-arginine. It participates in amino-acid biosynthesis; L-arginine biosynthesis; L-arginine from L-ornithine and carbamoyl phosphate: step 3/3. The polypeptide is Argininosuccinate lyase (Paraburkholderia xenovorans (strain LB400)).